Reading from the N-terminus, the 183-residue chain is MATAQPSQVRQKYDTNCDAAINSHITLELYTSYLYLSMAFYFNRDDVALENFFRYFLRLSDDKMEHAQKLMRLQNLRGGHICLHDIRKPECQGWESGLVAMESAFHLEKNVNQSLLDLYQLAVEKGDPQLCHFLESHYLHEQVKTIKELGGYVSNLRKICSPEAGLAEYLFDKLTLGGRVKET.

A Ferritin-like diiron domain is found at 11-160; the sequence is QKYDTNCDAA…GYVSNLRKIC (150 aa). Residues Glu-28, His-66, Glu-108, and Gln-142 each contribute to the Fe cation site.

This sequence belongs to the ferritin family. As to expression, testis specific. Also expressed in several cancers.

This Homo sapiens (Human) protein is Ferritin heavy polypeptide-like 17 (FTHL17).